The primary structure comprises 90 residues: Probable Fe(2+)-trafficking protein (90 aa).

This sequence belongs to the Fe(2+)-trafficking protein family.

Could be a mediator in iron transactions between iron acquisition and iron-requiring processes, such as synthesis and/or repair of Fe-S clusters in biosynthetic enzymes. This is Probable Fe(2+)-trafficking protein from Pseudomonas aeruginosa (strain UCBPP-PA14).